The following is a 579-amino-acid chain: PCNA-interacting partner (579 aa).

Positions 480–543 (TSFGNVHLDR…AKIPKKSNDS (64 aa)) are disordered. The segment covering 486–496 (HLDRSKNEKVS) has biased composition (basic and acidic residues).

This sequence belongs to the PARI family. As to quaternary structure, interacts with RAD51 and PCNA. Interacts with PARP1. Interacts with TASOR. As to expression, restricted to testis. Overexpressed in multiple cancer cells.

The protein resides in the cytoplasm. It is found in the nucleus. In terms of biological role, required to suppress inappropriate homologous recombination, thereby playing a central role DNA repair and in the maintenance of genomic stability. Antagonizes homologous recombination by interfering with the formation of the RAD51-DNA homologous recombination structure. Binds single-strand DNA and poly(A) homopolymers. Positively regulate the poly(ADP-ribosyl)ation activity of PARP1; however such function may be indirect. This Homo sapiens (Human) protein is PCNA-interacting partner (PARPBP).